A 376-amino-acid polypeptide reads, in one-letter code: Quinolinate synthase (376 aa).

Positions 57 and 78 each coordinate iminosuccinate. Cysteine 123 lines the [4Fe-4S] cluster pocket. Residues 149 to 151 and serine 166 each bind iminosuccinate; that span reads YAN. A [4Fe-4S] cluster-binding site is contributed by cysteine 210. Iminosuccinate is bound by residues 236–238 and threonine 253; that span reads HPE. Cysteine 307 is a [4Fe-4S] cluster binding site.

It belongs to the quinolinate synthase family. Type 1 subfamily. [4Fe-4S] cluster serves as cofactor.

The protein resides in the cytoplasm. The enzyme catalyses iminosuccinate + dihydroxyacetone phosphate = quinolinate + phosphate + 2 H2O + H(+). The protein operates within cofactor biosynthesis; NAD(+) biosynthesis; quinolinate from iminoaspartate: step 1/1. Catalyzes the condensation of iminoaspartate with dihydroxyacetone phosphate to form quinolinate. The polypeptide is Quinolinate synthase (Paraburkholderia phymatum (strain DSM 17167 / CIP 108236 / LMG 21445 / STM815) (Burkholderia phymatum)).